Reading from the N-terminus, the 351-residue chain is Histidine protein kinase SaeS (351 aa).

The next 2 membrane-spanning stretches (helical) occupy residues 9–29 and 40–60; these read IIIG…IAYI and TLTL…SIFI. In terms of domain architecture, HAMP spans 61–114; the sequence is NPLIQKIKQFNIKTKQFANGNYASNDKTFNSPKEIYELNQSFNKMASEITQQMN. The 220-residue stretch at 129-348 folds into the Histidine kinase domain; sequence NLAHDLKTPL…TMTVTLHKLD (220 aa). At His-132 the chain carries Phosphohistidine; by autocatalysis.

Post-translationally, autophosphorylated.

The protein localises to the cell membrane. It carries out the reaction ATP + protein L-histidine = ADP + protein N-phospho-L-histidine.. Its function is as follows. Member of the two-component regulatory system SaeR/SaeS involved in the regulation of staphylococcal virulence factors in a strain-dependent fashion. Probably functions as a membrane-associated protein kinase that upon sensing the appropriate signal, autophosphorylates and in turn activates the cytosolic response regulator SaeR. SaeR/SaeS activates the expression of exoproteins involved in adhesion and invasion of host cells, including hemolysins (hla, hlb, hlgC), coa, DNase, spa and cell wall-associated proteins (emp, eap, fnbA, fnbB, efb). Represses the expression of type 5 capsular polysaccharide (cap operon). Also modulates the expression of several other genes. The polypeptide is Histidine protein kinase SaeS (saeS) (Staphylococcus aureus (strain Newman)).